The primary structure comprises 426 residues: 4-hydroxy-3-methylbut-2-en-1-yl diphosphate synthase (flavodoxin) (426 aa).

The tract at residues 1 to 20 is disordered; it reads MLDRDLTLSDDAYESSPVSR. Residues C320, C323, C366, and E373 each coordinate [4Fe-4S] cluster.

This sequence belongs to the IspG family. [4Fe-4S] cluster is required as a cofactor.

The enzyme catalyses (2E)-4-hydroxy-3-methylbut-2-enyl diphosphate + oxidized [flavodoxin] + H2O + 2 H(+) = 2-C-methyl-D-erythritol 2,4-cyclic diphosphate + reduced [flavodoxin]. Its pathway is isoprenoid biosynthesis; isopentenyl diphosphate biosynthesis via DXP pathway; isopentenyl diphosphate from 1-deoxy-D-xylulose 5-phosphate: step 5/6. Its function is as follows. Converts 2C-methyl-D-erythritol 2,4-cyclodiphosphate (ME-2,4cPP) into 1-hydroxy-2-methyl-2-(E)-butenyl 4-diphosphate. This chain is 4-hydroxy-3-methylbut-2-en-1-yl diphosphate synthase (flavodoxin), found in Wolbachia pipientis subsp. Culex pipiens (strain wPip).